Reading from the N-terminus, the 351-residue chain is N-acetyl-gamma-glutamyl-phosphate reductase (351 aa).

Cysteine 154 is an active-site residue.

This sequence belongs to the NAGSA dehydrogenase family. Type 1 subfamily.

The protein resides in the cytoplasm. The catalysed reaction is N-acetyl-L-glutamate 5-semialdehyde + phosphate + NADP(+) = N-acetyl-L-glutamyl 5-phosphate + NADPH + H(+). Its pathway is amino-acid biosynthesis; L-arginine biosynthesis; N(2)-acetyl-L-ornithine from L-glutamate: step 3/4. Catalyzes the NADPH-dependent reduction of N-acetyl-5-glutamyl phosphate to yield N-acetyl-L-glutamate 5-semialdehyde. The protein is N-acetyl-gamma-glutamyl-phosphate reductase of Prochlorococcus marinus (strain MIT 9515).